The sequence spans 352 residues: Biotin synthase (352 aa).

The region spanning 44–262 is the Radical SAM core domain; sequence NRVQVSTLLS…LAVARILMPK (219 aa). 3 residues coordinate [4Fe-4S] cluster: C59, C63, and C66. Residues C103, C134, C194, and R266 each coordinate [2Fe-2S] cluster.

The protein belongs to the radical SAM superfamily. Biotin synthase family. As to quaternary structure, homodimer. [4Fe-4S] cluster serves as cofactor. It depends on [2Fe-2S] cluster as a cofactor.

The catalysed reaction is (4R,5S)-dethiobiotin + (sulfur carrier)-SH + 2 reduced [2Fe-2S]-[ferredoxin] + 2 S-adenosyl-L-methionine = (sulfur carrier)-H + biotin + 2 5'-deoxyadenosine + 2 L-methionine + 2 oxidized [2Fe-2S]-[ferredoxin]. It participates in cofactor biosynthesis; biotin biosynthesis; biotin from 7,8-diaminononanoate: step 2/2. Catalyzes the conversion of dethiobiotin (DTB) to biotin by the insertion of a sulfur atom into dethiobiotin via a radical-based mechanism. The chain is Biotin synthase from Pseudomonas syringae pv. syringae (strain B728a).